A 387-amino-acid polypeptide reads, in one-letter code: Galactokinase (387 aa).

33–36 (EHTD) contacts substrate. Residues S67 and 124–130 (GSGLSSS) each bind ATP. 2 residues coordinate Mg(2+): S130 and E162. Catalysis depends on D174, which acts as the Proton acceptor. Substrate is bound at residue Y224.

Belongs to the GHMP kinase family. GalK subfamily.

It localises to the cytoplasm. The enzyme catalyses alpha-D-galactose + ATP = alpha-D-galactose 1-phosphate + ADP + H(+). It functions in the pathway carbohydrate metabolism; galactose metabolism. Catalyzes the transfer of the gamma-phosphate of ATP to D-galactose to form alpha-D-galactose-1-phosphate (Gal-1-P). In Ligilactobacillus salivarius (strain UCC118) (Lactobacillus salivarius), this protein is Galactokinase.